A 213-amino-acid polypeptide reads, in one-letter code: 3-demethoxyubiquinol 3-hydroxylase (213 aa).

Positions 62, 92, 95, 144, 176, and 179 each coordinate Fe cation.

It belongs to the COQ7 family. It depends on Fe cation as a cofactor.

Its subcellular location is the cell membrane. It catalyses the reaction a 5-methoxy-2-methyl-3-(all-trans-polyprenyl)benzene-1,4-diol + AH2 + O2 = a 3-demethylubiquinol + A + H2O. Its pathway is cofactor biosynthesis; ubiquinone biosynthesis. Catalyzes the hydroxylation of 2-nonaprenyl-3-methyl-6-methoxy-1,4-benzoquinol during ubiquinone biosynthesis. The chain is 3-demethoxyubiquinol 3-hydroxylase from Legionella pneumophila subsp. pneumophila (strain Philadelphia 1 / ATCC 33152 / DSM 7513).